Consider the following 63-residue polypeptide: Large ribosomal subunit protein bL28 (63 aa).

This sequence belongs to the bacterial ribosomal protein bL28 family.

This Desulfitobacterium hafniense (strain DSM 10664 / DCB-2) protein is Large ribosomal subunit protein bL28.